Here is a 284-residue protein sequence, read N- to C-terminus: GPN-loop GTPase 3 (284 aa).

13–18 (GSGKST) is a GTP binding site. A Gly-Pro-Asn (GPN)-loop; involved in dimer interface motif is present at residues 72 to 74 (GPN). 174 to 177 (TKMD) contacts GTP. Residues 261-284 (KEPKEHEDESSSMFDEYFQEHQNE) form a disordered region.

It belongs to the GPN-loop GTPase family. Heterodimer with GPN1. Binds to RNA polymerase II (RNAPII). Interacts directly with subunits RPB4 and RPB7 and the CTD of RPB1.

Functionally, small GTPase required for proper localization of RNA polymerase II (RNAPII). May act at an RNAP assembly step prior to nuclear import. This Bos taurus (Bovine) protein is GPN-loop GTPase 3.